We begin with the raw amino-acid sequence, 213 residues long: Endoplasmic reticulum vesicle protein 25 (213 aa).

The signal sequence occupies residues 1-20 (MILRIPSLLYLFTLLTAVYA). Topologically, residues 21–181 (VKFDLTSDRN…TNESTNQRVK (161 aa)) are lumenal. Positions 33–122 (PSIIWNFASA…VRSVELDVDI (90 aa)) constitute a GOLD domain. The helical transmembrane segment at 182–202 (VFSVLIICCTIGLGVWQLLHL) threads the bilayer. At 203–213 (RSFFKRKYLID) the chain is on the cytoplasmic side.

Belongs to the EMP24/GP25L family.

Its subcellular location is the endoplasmic reticulum membrane. The protein resides in the golgi apparatus membrane. In terms of biological role, constituent of COPII-coated endoplasmic reticulum-derived transport vesicles. Required for efficient transport of a subset of secretory proteins to the Golgi. Facilitates retrograde transport from the Golgi to the endoplasmic reticulum. This Cryptococcus neoformans var. neoformans serotype D (strain B-3501A) (Filobasidiella neoformans) protein is Endoplasmic reticulum vesicle protein 25 (ERV25).